Here is a 55-residue protein sequence, read N- to C-terminus: Large ribosomal subunit protein bL33 (55 aa).

Belongs to the bacterial ribosomal protein bL33 family.

This chain is Large ribosomal subunit protein bL33, found in Bradyrhizobium sp. (strain BTAi1 / ATCC BAA-1182).